The following is a 432-amino-acid chain: Glutamate-1-semialdehyde 2,1-aminomutase (432 aa).

The residue at position 265 (Lys-265) is an N6-(pyridoxal phosphate)lysine.

It belongs to the class-III pyridoxal-phosphate-dependent aminotransferase family. HemL subfamily. In terms of assembly, homodimer. Requires pyridoxal 5'-phosphate as cofactor.

It is found in the cytoplasm. The enzyme catalyses (S)-4-amino-5-oxopentanoate = 5-aminolevulinate. It participates in porphyrin-containing compound metabolism; protoporphyrin-IX biosynthesis; 5-aminolevulinate from L-glutamyl-tRNA(Glu): step 2/2. The protein is Glutamate-1-semialdehyde 2,1-aminomutase of Vibrio cholerae serotype O1 (strain ATCC 39541 / Classical Ogawa 395 / O395).